A 581-amino-acid chain; its full sequence is Zinc finger protein 319 (581 aa).

Residues 1 to 22 are compositionally biased toward low complexity; the sequence is MSESWQQPPQTQPQQPQAPQPQ. The interval 1–39 is disordered; that stretch reads MSESWQQPPQTQPQQPQAPQPQHHAETPPALAEHTLPPG. The segment at 75–99 adopts a C2H2-type 1 zinc-finger fold; the sequence is PKCGVCGHDLAHLSSPHEHQCLAGH. Residues 103 to 125 form a C2H2-type 2; degenerate zinc finger; sequence FQCTQCLKIFHQATDLLEHQCVQ. K129 is covalently cross-linked (Glycyl lysine isopeptide (Lys-Gly) (interchain with G-Cter in SUMO2)). 4 C2H2-type zinc fingers span residues 131–153, 201–223, 229–251, and 257–279; these read FVCG…HSSH, YSCP…ERIH, YKCT…KRTH, and YKCA…MYAH. S280 bears the Phosphoserine mark. A C2H2-type 7; degenerate zinc finger spans residues 286–308; the sequence is FRCNVCELHFKESSELLQHPCTP. C2H2-type zinc fingers lie at residues 314 to 336, 342 to 364, and 370 to 392; these read FRCG…ERTH, FKCD…RRTH, and FKCG…QHVH. The C2H2-type 11; degenerate zinc finger occupies 398–420; that stretch reads FKCPVCQKGFDQSAELLRHKCLP. The C2H2-type 12 zinc-finger motif lies at 427–449; the sequence is FKCPVCNKAYKRASALQKHQLSH. The C2H2-type 13; degenerate zinc finger occupies 457–479; the sequence is LRCTLCERRFFSSSEFVQHRCDP. 3 consecutive C2H2-type zinc fingers follow at residues 485–507, 513–535, and 541–563; these read LKCP…RRVH, YKCP…QGVH, and FKCV…SAQH.

It belongs to the krueppel C2H2-type zinc-finger protein family.

The protein localises to the nucleus. In terms of biological role, may be involved in transcriptional regulation. This is Zinc finger protein 319 (Znf319) from Mus musculus (Mouse).